The chain runs to 336 residues: Phosphate acyltransferase (336 aa).

The protein belongs to the PlsX family. In terms of assembly, homodimer. Probably interacts with PlsY.

The protein resides in the cytoplasm. The enzyme catalyses a fatty acyl-[ACP] + phosphate = an acyl phosphate + holo-[ACP]. Its pathway is lipid metabolism; phospholipid metabolism. Its function is as follows. Catalyzes the reversible formation of acyl-phosphate (acyl-PO(4)) from acyl-[acyl-carrier-protein] (acyl-ACP). This enzyme utilizes acyl-ACP as fatty acyl donor, but not acyl-CoA. In Dictyoglomus turgidum (strain DSM 6724 / Z-1310), this protein is Phosphate acyltransferase.